We begin with the raw amino-acid sequence, 385 residues long: S-adenosylmethionine synthase (385 aa).

Residue His15 participates in ATP binding. Asp17 is a binding site for Mg(2+). Residue Glu43 coordinates K(+). Residues Glu56 and Gln99 each coordinate L-methionine. The tract at residues 99–109 (QSPDINQGVDR) is flexible loop. Residues 164-166 (DAK), 230-231 (RF), Asp239, 245-246 (RK), Ala262, and Lys266 contribute to the ATP site. Asp239 is an L-methionine binding site. Lys270 contributes to the L-methionine binding site.

It belongs to the AdoMet synthase family. As to quaternary structure, homotetramer; dimer of dimers. Requires Mg(2+) as cofactor. The cofactor is K(+).

The protein resides in the cytoplasm. The enzyme catalyses L-methionine + ATP + H2O = S-adenosyl-L-methionine + phosphate + diphosphate. It participates in amino-acid biosynthesis; S-adenosyl-L-methionine biosynthesis; S-adenosyl-L-methionine from L-methionine: step 1/1. Its function is as follows. Catalyzes the formation of S-adenosylmethionine (AdoMet) from methionine and ATP. The overall synthetic reaction is composed of two sequential steps, AdoMet formation and the subsequent tripolyphosphate hydrolysis which occurs prior to release of AdoMet from the enzyme. The polypeptide is S-adenosylmethionine synthase (Hamiltonella defensa subsp. Acyrthosiphon pisum (strain 5AT)).